The primary structure comprises 248 residues: uncharacterized protein (248 aa).

Position 9–33 (9–33 (IITGASSGIGEATAILLAEKGAKLV)) interacts with NADP(+). Ser141 lines the substrate pocket. Catalysis depends on Tyr154, which acts as the Proton acceptor.

This sequence belongs to the short-chain dehydrogenases/reductases (SDR) family.

This is an uncharacterized protein from Listeria innocua serovar 6a (strain ATCC BAA-680 / CLIP 11262).